A 123-amino-acid chain; its full sequence is Small ribosomal subunit protein uS12 (123 aa).

Residues 1–30 (MPTIQQLVRKGRQDKVEKNKTPALEGSPQR) are disordered. Residues 11-20 (GRQDKVEKNK) show a composition bias toward basic and acidic residues. Asp89 is modified (3-methylthioaspartic acid).

This sequence belongs to the universal ribosomal protein uS12 family. Part of the 30S ribosomal subunit. Contacts proteins S8 and S17. May interact with IF1 in the 30S initiation complex.

Its function is as follows. With S4 and S5 plays an important role in translational accuracy. Interacts with and stabilizes bases of the 16S rRNA that are involved in tRNA selection in the A site and with the mRNA backbone. Located at the interface of the 30S and 50S subunits, it traverses the body of the 30S subunit contacting proteins on the other side and probably holding the rRNA structure together. The combined cluster of proteins S8, S12 and S17 appears to hold together the shoulder and platform of the 30S subunit. This is Small ribosomal subunit protein uS12 (rpsL) from Streptomyces avermitilis (strain ATCC 31267 / DSM 46492 / JCM 5070 / NBRC 14893 / NCIMB 12804 / NRRL 8165 / MA-4680).